The following is an 804-amino-acid chain: Probable replication endonuclease from prophage-like region (804 aa).

Catalysis depends on O-(5'-phospho-DNA)-tyrosine intermediate residues Tyr-498 and Tyr-502.

This sequence belongs to the phage GPA family.

Possible endonuclease which induces a single-strand cut and initiates DNA replication. The protein is Probable replication endonuclease from prophage-like region of Shigella boydii serotype 4 (strain Sb227).